A 428-amino-acid chain; its full sequence is Tryptophan synthase beta chain (428 aa).

Lys-92 bears the N6-(pyridoxal phosphate)lysine mark.

The protein belongs to the TrpB family. In terms of assembly, tetramer of two alpha and two beta chains. The cofactor is pyridoxal 5'-phosphate.

The catalysed reaction is (1S,2R)-1-C-(indol-3-yl)glycerol 3-phosphate + L-serine = D-glyceraldehyde 3-phosphate + L-tryptophan + H2O. It participates in amino-acid biosynthesis; L-tryptophan biosynthesis; L-tryptophan from chorismate: step 5/5. The beta subunit is responsible for the synthesis of L-tryptophan from indole and L-serine. This Leptothrix cholodnii (strain ATCC 51168 / LMG 8142 / SP-6) (Leptothrix discophora (strain SP-6)) protein is Tryptophan synthase beta chain.